The chain runs to 249 residues: 3-deoxy-manno-octulosonate cytidylyltransferase (249 aa).

It belongs to the KdsB family.

It is found in the cytoplasm. It carries out the reaction 3-deoxy-alpha-D-manno-oct-2-ulosonate + CTP = CMP-3-deoxy-beta-D-manno-octulosonate + diphosphate. Its pathway is nucleotide-sugar biosynthesis; CMP-3-deoxy-D-manno-octulosonate biosynthesis; CMP-3-deoxy-D-manno-octulosonate from 3-deoxy-D-manno-octulosonate and CTP: step 1/1. It functions in the pathway bacterial outer membrane biogenesis; lipopolysaccharide biosynthesis. Activates KDO (a required 8-carbon sugar) for incorporation into bacterial lipopolysaccharide in Gram-negative bacteria. This is 3-deoxy-manno-octulosonate cytidylyltransferase from Aliivibrio fischeri (strain ATCC 700601 / ES114) (Vibrio fischeri).